Here is a 648-residue protein sequence, read N- to C-terminus: Biosynthetic arginine decarboxylase (648 aa).

Position 109 is an N6-(pyridoxal phosphate)lysine (Lys-109). A substrate-binding site is contributed by 291 to 301 (LDVGGGLGVDY).

The protein belongs to the Orn/Lys/Arg decarboxylase class-II family. SpeA subfamily. It depends on Mg(2+) as a cofactor. Pyridoxal 5'-phosphate serves as cofactor.

It carries out the reaction L-arginine + H(+) = agmatine + CO2. Catalyzes the biosynthesis of agmatine from arginine. In Prochlorococcus marinus (strain SARG / CCMP1375 / SS120), this protein is Biosynthetic arginine decarboxylase.